Consider the following 547-residue polypeptide: Chaperonin GroEL 1 (547 aa).

ATP contacts are provided by residues 30–33 (TLGP), lysine 51, 87–91 (DGTTT), glycine 415, and aspartate 496. The segment at 525-547 (KPEPKSPAGGPGMGGMGGMDGMM) is disordered. A compositionally biased stretch (gly residues) spans 533–547 (GGPGMGGMGGMDGMM).

It belongs to the chaperonin (HSP60) family. In terms of assembly, forms a cylinder of 14 subunits composed of two heptameric rings stacked back-to-back. Interacts with the co-chaperonin GroES.

Its subcellular location is the cytoplasm. The enzyme catalyses ATP + H2O + a folded polypeptide = ADP + phosphate + an unfolded polypeptide.. In terms of biological role, together with its co-chaperonin GroES, plays an essential role in assisting protein folding. The GroEL-GroES system forms a nano-cage that allows encapsulation of the non-native substrate proteins and provides a physical environment optimized to promote and accelerate protein folding. This is Chaperonin GroEL 1 from Cereibacter sphaeroides (strain ATCC 17023 / DSM 158 / JCM 6121 / CCUG 31486 / LMG 2827 / NBRC 12203 / NCIMB 8253 / ATH 2.4.1.) (Rhodobacter sphaeroides).